We begin with the raw amino-acid sequence, 563 residues long: BOS complex subunit NCLN (563 aa).

The signal sequence occupies residues 1 to 42 (MLEEAGEVLENMLKASCLPLGFIVFLPAVLLLVAPPLPAADA). The Lumenal portion of the chain corresponds to 43-522 (AHEFTVYRMQ…VMNAYRVKPA (480 aa)). Asn241 and Asn428 each carry an N-linked (GlcNAc...) asparagine glycan. A helical transmembrane segment spans residues 523–543 (VFDLLLAVGIAAYLGMAYVAV). Topologically, residues 544–563 (QHFSLLYKTVQRLLVKAKTQ) are cytoplasmic.

Belongs to the nicastrin family. As to quaternary structure, component of the back of Sec61 (BOS) complex, composed of NCLN/Nicalin, NOMO (NOMO1, NOMO2 or NOMO3) and TMEM147. The BOS complex is part of the multi-pass translocon (MPT) complex, composed of three subcomplexes, the GEL complex (composed of RAB5IF/OPTI and TMCO1), the BOS complex (composed of NCLN/Nicalin, NOMO and TMEM147) and the PAT complex (composed of WDR83OS/Asterix and CCDC47). The MPT complex associates with the SEC61 complex. In terms of tissue distribution, highly expressed in pancreas and skeletal muscle and, at lower levels, in heart.

It is found in the endoplasmic reticulum membrane. Component of the multi-pass translocon (MPT) complex that mediates insertion of multi-pass membrane proteins into the lipid bilayer of membranes. The MPT complex takes over after the SEC61 complex: following membrane insertion of the first few transmembrane segments of proteins by the SEC61 complex, the MPT complex occludes the lateral gate of the SEC61 complex to promote insertion of subsequent transmembrane regions. May antagonize Nodal signaling and subsequent organization of axial structures during mesodermal patterning, via its interaction with NOMO. The polypeptide is BOS complex subunit NCLN (Homo sapiens (Human)).